Consider the following 119-residue polypeptide: Beta-2-microglobulin (119 aa).

A signal peptide spans 1–20; that stretch reads MARSVVVALLVLLSLSGLEA. The Ig-like C1-type domain maps to 25–114; it reads PKIQVYSRHP…VTFSTPKTVK (90 aa). A disulfide bond links Cys45 and Cys100.

Belongs to the beta-2-microglobulin family. Heterodimer of an alpha chain and a beta chain. Beta-2-microglobulin is the beta-chain of major histocompatibility complex class I molecules.

The protein resides in the secreted. In terms of biological role, component of the class I major histocompatibility complex (MHC). Involved in the presentation of peptide antigens to the immune system. The sequence is that of Beta-2-microglobulin (B2M) from Ateles paniscus (Black spider monkey).